The sequence spans 446 residues: Glucarate dehydratase (446 aa).

Positions 32, 103, 150, and 205 each coordinate substrate. The Proton acceptor role is filled by Lys-207. 3 residues coordinate Mg(2+): Asp-235, Glu-266, and Asn-289. Residue Asp-235–Asn-237 coordinates substrate. Substrate is bound by residues Asn-289, His-339–Asn-341, His-368, and Arg-422. His-339 (proton acceptor) is an active-site residue.

It belongs to the mandelate racemase/muconate lactonizing enzyme family. GlucD subfamily. Homodimer. It depends on Mg(2+) as a cofactor.

The enzyme catalyses D-glucarate = 5-dehydro-4-deoxy-D-glucarate + H2O. It functions in the pathway carbohydrate acid metabolism; D-glucarate degradation; 2,5-dioxopentanoate from D-glucarate: step 1/2. Catalyzes the dehydration of glucarate to 5-keto-4-deoxy-D-glucarate (5-kdGluc). Also acts on L-idarate. The protein is Glucarate dehydratase (gudD) of Escherichia coli O157:H7.